The primary structure comprises 64 residues: Large ribosomal subunit protein bL35 (64 aa).

Belongs to the bacterial ribosomal protein bL35 family.

This Wolinella succinogenes (strain ATCC 29543 / DSM 1740 / CCUG 13145 / JCM 31913 / LMG 7466 / NCTC 11488 / FDC 602W) (Vibrio succinogenes) protein is Large ribosomal subunit protein bL35.